The following is a 72-amino-acid chain: NADH dehydrogenase [ubiquinone] 1 beta subcomplex subunit 3-A (72 aa).

A helical membrane pass occupies residues 31–48 (ALPGIGIGVGAFCVYLVG).

It belongs to the complex I NDUFB3 subunit family. In terms of assembly, complex I is composed of at least 49 different subunits.

The protein localises to the mitochondrion inner membrane. Its function is as follows. Accessory subunit of the mitochondrial membrane respiratory chain NADH dehydrogenase (Complex I), that is believed not to be involved in catalysis. Complex I functions in the transfer of electrons from NADH to the respiratory chain. The immediate electron acceptor for the enzyme is believed to be ubiquinone. The protein is NADH dehydrogenase [ubiquinone] 1 beta subcomplex subunit 3-A of Arabidopsis thaliana (Mouse-ear cress).